Consider the following 104-residue polypeptide: Flagellar hook-basal body complex protein FliE (104 aa).

This sequence belongs to the FliE family.

It localises to the bacterial flagellum basal body. The polypeptide is Flagellar hook-basal body complex protein FliE (Salmonella arizonae (strain ATCC BAA-731 / CDC346-86 / RSK2980)).